A 177-amino-acid chain; its full sequence is Large ribosomal subunit protein uL6 (177 aa).

This sequence belongs to the universal ribosomal protein uL6 family. Part of the 50S ribosomal subunit.

Its function is as follows. This protein binds to the 23S rRNA, and is important in its secondary structure. It is located near the subunit interface in the base of the L7/L12 stalk, and near the tRNA binding site of the peptidyltransferase center. The chain is Large ribosomal subunit protein uL6 from Rickettsia felis (strain ATCC VR-1525 / URRWXCal2) (Rickettsia azadi).